An 819-amino-acid chain; its full sequence is ATP-dependent DNA helicase PIF4 (819 aa).

The N-terminal 84 residues, 1-84 (MLLNSTRTLL…RQASSAGHND (84 aa)), are a transit peptide targeting the mitochondrion. The disordered stretch occupies residues 76 to 101 (QASSAGHNDLGLQEKEKSSGDESAFS). 126–133 (GGAGVGKS) lines the ATP pocket. A DNA-binding region spans residues 734-754 (HIIYVAASRVKKFSQLRMINV).

It belongs to the helicase family. PIF1 subfamily. As to quaternary structure, monomer. The cofactor is Mg(2+).

The protein resides in the mitochondrion matrix. It is found in the kinetoplast. The catalysed reaction is Couples ATP hydrolysis with the unwinding of duplex DNA at the replication fork by translocating in the 5'-3' direction. This creates two antiparallel DNA single strands (ssDNA). The leading ssDNA polymer is the template for DNA polymerase III holoenzyme which synthesizes a continuous strand.. It catalyses the reaction ATP + H2O = ADP + phosphate + H(+). Its function is as follows. DNA-dependent ATPase and 5'-3' DNA helicase required for the maintenance of mitochondrial (kinetoplast) genome stability. The protein is ATP-dependent DNA helicase PIF4 of Trypanosoma brucei brucei (strain 927/4 GUTat10.1).